Here is a 290-residue protein sequence, read N- to C-terminus: MPSTREIRRRIRSVKNLAQITRAMEMVSASKMRRAQRNVLATRPYADRLLDVMGELTGRAVGMRRGTLLEVRPVVKGVALIVVTPDRGLAGSLVANVLRRASRFILDEQEKKHTVEVLAIGKKGRDFMVRTRQNLVAEVTKLGDYPRLTDILGIATNVINGFLSGRYDEVYVLYSQFVNTLVQRPTIKRLLPIDPPHEPAERMVDYTYEPSQEEVLRALLPRFVEVQLYQAVLEAIASEHSARMVAMRNATDNAKELQRDLTLSYNKTRQANITKEVSEIASGAAALAEM.

It belongs to the ATPase gamma chain family. As to quaternary structure, F-type ATPases have 2 components, CF(1) - the catalytic core - and CF(0) - the membrane proton channel. CF(1) has five subunits: alpha(3), beta(3), gamma(1), delta(1), epsilon(1). CF(0) has three main subunits: a, b and c.

Its subcellular location is the cell membrane. Produces ATP from ADP in the presence of a proton gradient across the membrane. The gamma chain is believed to be important in regulating ATPase activity and the flow of protons through the CF(0) complex. The protein is ATP synthase gamma chain of Roseiflexus castenholzii (strain DSM 13941 / HLO8).